A 200-amino-acid chain; its full sequence is 3-isopropylmalate dehydratase small subunit (200 aa).

Belongs to the LeuD family. LeuD type 1 subfamily. In terms of assembly, heterodimer of LeuC and LeuD.

It catalyses the reaction (2R,3S)-3-isopropylmalate = (2S)-2-isopropylmalate. It participates in amino-acid biosynthesis; L-leucine biosynthesis; L-leucine from 3-methyl-2-oxobutanoate: step 2/4. Catalyzes the isomerization between 2-isopropylmalate and 3-isopropylmalate, via the formation of 2-isopropylmaleate. In Vibrio atlanticus (strain LGP32) (Vibrio splendidus (strain Mel32)), this protein is 3-isopropylmalate dehydratase small subunit.